Here is a 305-residue protein sequence, read N- to C-terminus: UDP-N-acetylenolpyruvoylglucosamine reductase (305 aa).

In terms of domain architecture, FAD-binding PCMH-type spans 33 to 198; sequence RVGGPAQVLF…TGGTFRGRRA (166 aa). Residue Arg-178 is part of the active site. Ser-227 serves as the catalytic Proton donor. Glu-297 is a catalytic residue.

This sequence belongs to the MurB family. Requires FAD as cofactor.

It localises to the cytoplasm. It carries out the reaction UDP-N-acetyl-alpha-D-muramate + NADP(+) = UDP-N-acetyl-3-O-(1-carboxyvinyl)-alpha-D-glucosamine + NADPH + H(+). The protein operates within cell wall biogenesis; peptidoglycan biosynthesis. Its function is as follows. Cell wall formation. This is UDP-N-acetylenolpyruvoylglucosamine reductase from Nitrobacter hamburgensis (strain DSM 10229 / NCIMB 13809 / X14).